Consider the following 518-residue polypeptide: Probable malate:quinone oxidoreductase (518 aa).

Residues 495–518 (GAIPATTDGQSTAGTEHTPTAATV) are disordered. Residues 501-518 (TDGQSTAGTEHTPTAATV) show a composition bias toward polar residues.

It belongs to the MQO family. Requires FAD as cofactor.

It catalyses the reaction (S)-malate + a quinone = a quinol + oxaloacetate. It participates in carbohydrate metabolism; tricarboxylic acid cycle; oxaloacetate from (S)-malate (quinone route): step 1/1. This is Probable malate:quinone oxidoreductase from Mycolicibacterium gilvum (strain PYR-GCK) (Mycobacterium gilvum (strain PYR-GCK)).